An 883-amino-acid chain; its full sequence is Phosphoenolpyruvate carboxylase (883 aa).

Active-site residues include H138 and K546.

Belongs to the PEPCase type 1 family. The cofactor is Mg(2+).

The catalysed reaction is oxaloacetate + phosphate = phosphoenolpyruvate + hydrogencarbonate. Its function is as follows. Forms oxaloacetate, a four-carbon dicarboxylic acid source for the tricarboxylic acid cycle. The protein is Phosphoenolpyruvate carboxylase of Erwinia tasmaniensis (strain DSM 17950 / CFBP 7177 / CIP 109463 / NCPPB 4357 / Et1/99).